The following is a 229-amino-acid chain: Demethylmenaquinone methyltransferase (229 aa).

Residues Thr-62, Asp-80, 100 to 101 (DG), and Ser-117 contribute to the S-adenosyl-L-methionine site.

This sequence belongs to the class I-like SAM-binding methyltransferase superfamily. MenG/UbiE family.

The catalysed reaction is a 2-demethylmenaquinol + S-adenosyl-L-methionine = a menaquinol + S-adenosyl-L-homocysteine + H(+). It functions in the pathway quinol/quinone metabolism; menaquinone biosynthesis; menaquinol from 1,4-dihydroxy-2-naphthoate: step 2/2. Methyltransferase required for the conversion of demethylmenaquinol (DMKH2) to menaquinol (MKH2). This Corynebacterium kroppenstedtii (strain DSM 44385 / JCM 11950 / CIP 105744 / CCUG 35717) protein is Demethylmenaquinone methyltransferase.